Reading from the N-terminus, the 333-residue chain is 5-formaminoimidazole-4-carboxamide-1-(beta)-D-ribofuranosyl 5'-monophosphate synthetase (333 aa).

5-amino-1-(5-phospho-beta-D-ribosyl)imidazole-4-carboxamide contacts are provided by His-10 and Ser-74. One can recognise an ATP-grasp domain in the interval 95 to 324; it reads RNLFAWESNQ…ISREIRLALN (230 aa). ATP contacts are provided by residues 125–185 and Glu-207; that span reads VEDV…VPMY. Residue Asn-230 participates in 5-amino-1-(5-phospho-beta-D-ribosyl)imidazole-4-carboxamide binding. Residues Glu-269 and Glu-282 each coordinate Mg(2+).

This sequence belongs to the phosphohexose mutase family. It depends on Mg(2+) as a cofactor. Mn(2+) serves as cofactor.

It carries out the reaction 5-amino-1-(5-phospho-beta-D-ribosyl)imidazole-4-carboxamide + formate + ATP = 5-formamido-1-(5-phospho-D-ribosyl)imidazole-4-carboxamide + ADP + phosphate. It functions in the pathway purine metabolism; IMP biosynthesis via de novo pathway; 5-formamido-1-(5-phospho-D-ribosyl)imidazole-4-carboxamide from 5-amino-1-(5-phospho-D-ribosyl)imidazole-4-carboxamide (formate route): step 1/1. Functionally, catalyzes the ATP- and formate-dependent formylation of 5-aminoimidazole-4-carboxamide-1-beta-d-ribofuranosyl 5'-monophosphate (AICAR) to 5-formaminoimidazole-4-carboxamide-1-beta-d-ribofuranosyl 5'-monophosphate (FAICAR) in the absence of folates. In Sulfolobus acidocaldarius (strain ATCC 33909 / DSM 639 / JCM 8929 / NBRC 15157 / NCIMB 11770), this protein is 5-formaminoimidazole-4-carboxamide-1-(beta)-D-ribofuranosyl 5'-monophosphate synthetase.